The following is a 445-amino-acid chain: 6-phosphogluconate dehydrogenase, decarboxylating (445 aa).

Residues Ala1–Gly4, Asn22–Ser24, Val63–Ala65, and Asn91 contribute to the NADP(+) site. Substrate-binding positions include Asn91 and Ser117–Gly119. Lys172 functions as the Proton acceptor in the catalytic mechanism. His175–Asn176 serves as a coordination point for substrate. Glu179 serves as the catalytic Proton donor. Tyr180, Lys249, Arg276, Arg434, and His440 together coordinate substrate.

This sequence belongs to the 6-phosphogluconate dehydrogenase family. As to quaternary structure, homodimer.

The enzyme catalyses 6-phospho-D-gluconate + NADP(+) = D-ribulose 5-phosphate + CO2 + NADPH. It functions in the pathway carbohydrate degradation; pentose phosphate pathway; D-ribulose 5-phosphate from D-glucose 6-phosphate (oxidative stage): step 3/3. Catalyzes the oxidative decarboxylation of 6-phosphogluconate to ribulose 5-phosphate and CO(2), with concomitant reduction of NADP to NADPH. The chain is 6-phosphogluconate dehydrogenase, decarboxylating (gnd) from Citrobacter freundii.